The chain runs to 460 residues: NADH-ubiquinone oxidoreductase chain 4 (460 aa).

The next 13 membrane-spanning stretches (helical) occupy residues 20–42 (AKWLWTTSIAQSLIIALASLSWL), 61–81 (PLSTPLLVLTCWLLPLMILAS), 94–113 (RAYISLLVSLQTFLVLAFGA), 117–139 (IMFYVMFEATLLPTLIIITRWGN), 148–168 (TYFLFYTLAGSLPLLVALLLM), 195–215 (LWWAACLLAFLVKMPLYGVHL), 225–245 (PIAGSMILAAVLLKLGGYGMM), 258–278 (LAYPFIVLALWGIIMTGSICL), 285–304 (SLIAYSSVGHMGLVAGGILI), 308–330 (WGFTGAIILMIAHGLASSALFCL), 351–371 (MILPLMTTWWFVASLANLALP), 394–414 (LILTGLGTLITASYSLYLFLM), and 436–456 (LLIILHLIPIVLLILKPELMW).

This sequence belongs to the complex I subunit 4 family.

The protein resides in the mitochondrion membrane. It catalyses the reaction a ubiquinone + NADH + 5 H(+)(in) = a ubiquinol + NAD(+) + 4 H(+)(out). Core subunit of the mitochondrial membrane respiratory chain NADH dehydrogenase (Complex I) that is believed to belong to the minimal assembly required for catalysis. Complex I functions in the transfer of electrons from NADH to the respiratory chain. The immediate electron acceptor for the enzyme is believed to be ubiquinone. This is NADH-ubiquinone oxidoreductase chain 4 (MT-ND4) from Oncorhynchus mykiss (Rainbow trout).